The chain runs to 386 residues: Alkanesulfonate monooxygenase (386 aa).

The protein belongs to the SsuD family.

The enzyme catalyses an alkanesulfonate + FMNH2 + O2 = an aldehyde + FMN + sulfite + H2O + 2 H(+). Its function is as follows. Catalyzes the desulfonation of aliphatic sulfonates. In Delftia acidovorans (strain DSM 14801 / SPH-1), this protein is Alkanesulfonate monooxygenase.